We begin with the raw amino-acid sequence, 337 residues long: Cytoskeleton protein RodZ (337 aa).

The Cytoplasmic segment spans residues 1-111 (MNTEATHDQN…LGKRRKKRDG (111 aa)). The HTH cro/C1-type domain maps to 19–71 (LRNAREQLGLSQQAVAERLCLKVSTVRDIEEDKAPADLASTFLRGYIRSYARL). The segment at residues 30-49 (QQAVAERLCLKVSTVRDIEE) is a DNA-binding region (H-T-H motif). A helical; Signal-anchor for type II membrane protein membrane pass occupies residues 112–132 (WLMTFTWLVLFVVIGLSGAWW). Topologically, residues 133–337 (WQDHKAQQEE…TLNAEQSPAQ (205 aa)) are periplasmic. A compositionally biased stretch (polar residues) spans 145–167 (TMADQSSAELSSNSEQGQSVPLN). The segment at 145–236 (TMADQSSAEL…TAATTPDGAA (92 aa)) is disordered. Positions 168 to 207 (TSTTTDPATTSTPPASVDTTATNTQTPVVTAPAPAVDPQQ) are enriched in low complexity. Polar residues predominate over residues 208–218 (NAVVSPSQANV). The segment covering 219–236 (DTAATPAPTAATTPDGAA) has biased composition (low complexity).

Belongs to the RodZ family.

It is found in the cell inner membrane. In terms of biological role, cytoskeletal protein that is involved in cell-shape control through regulation of the length of the long axis. The polypeptide is Cytoskeleton protein RodZ (Escherichia coli O157:H7).